We begin with the raw amino-acid sequence, 982 residues long: Cell division cycle-associated protein 2 (982 aa).

Polar residues predominate over residues 75-87; it reads VKTSSGKSTSSLQ. Residues 75–97 are disordered; the sequence is VKTSSGKSTSSLQKARRRSTVGV. Phosphoserine is present on residues Ser-100, Ser-122, and Ser-133. Disordered stretches follow at residues 192–216 and 274–315; these read SGFP…NYLS and TPLS…CGSS. Composition is skewed to polar residues over residues 207–216 and 275–315; these read SQDSPDNYLS and PLSS…CGSS. Phosphoserine occurs at positions 286, 296, and 306. A Phosphothreonine modification is found at Thr-309. In terms of domain architecture, PP1-binding spans 379–436; it reads KRKRVTFGEDLSPEVFDESLPANTPLCKGGTPVRPRTVKTTSPLQSPVHEQFLQPNFD. 2 positions are modified to phosphoserine: Ser-390 and Ser-397. 4 disordered regions span residues 400–473, 489–545, 568–638, and 651–716; these read ANTP…NTCS, TRTS…KSYR, KPLL…QSQV, and ASER…PQSQ. Thr-402 carries the phosphothreonine modification. At Ser-424 the chain carries Phosphoserine. 2 stretches are compositionally biased toward polar residues: residues 451-473 and 498-512; these read SFAN…NTCS and TLSS…TTQA. Basic residues predominate over residues 518 to 545; the sequence is KMSRRKSREKKHTSAALPKKKQVLKSYR. 2 positions are modified to phosphoserine: Ser-572 and Ser-595. Residues 651–668 are compositionally biased toward polar residues; sequence ASERGPNASTRDTGSEGN. The segment covering 669–685 has biased composition (basic and acidic residues); sequence TRAESKCQSAKEPKPGT. Ser-735 carries the phosphoserine modification. A Glycyl lysine isopeptide (Lys-Gly) (interchain with G-Cter in SUMO2) cross-link involves residue Lys-741. The disordered stretch occupies residues 910 to 982; that stretch reads ECPSSKEETI…SLKGESAQLP (73 aa). At Ser-913 the chain carries Phosphoserine. A compositionally biased stretch (low complexity) spans 931–942; that stretch reads VSGSESQGVGSS. Phosphoserine is present on Ser-950. Residues 952-964 are compositionally biased toward polar residues; it reads CGSTLTDANSATQ. Residue Ser-973 is modified to Phosphoserine.

As to quaternary structure, interacts with PPP1CC. In terms of processing, phosphorylated by CDK1. May regulate its subcellular location.

The protein localises to the nucleus. In terms of biological role, regulator of chromosome structure during mitosis required for condensin-depleted chromosomes to retain their compact architecture through anaphase. Acts by mediating the recruitment of phopsphatase PP1-gamma subunit (PPP1CC) to chromatin at anaphase and into the following interphase. At anaphase onset, its association with chromatin targets a pool of PPP1CC to dephosphorylate substrates. The chain is Cell division cycle-associated protein 2 (Cdca2) from Mus musculus (Mouse).